A 200-amino-acid chain; its full sequence is Imidazoleglycerol-phosphate dehydratase (200 aa).

The protein belongs to the imidazoleglycerol-phosphate dehydratase family.

It localises to the cytoplasm. The catalysed reaction is D-erythro-1-(imidazol-4-yl)glycerol 3-phosphate = 3-(imidazol-4-yl)-2-oxopropyl phosphate + H2O. The protein operates within amino-acid biosynthesis; L-histidine biosynthesis; L-histidine from 5-phospho-alpha-D-ribose 1-diphosphate: step 6/9. This is Imidazoleglycerol-phosphate dehydratase from Renibacterium salmoninarum (strain ATCC 33209 / DSM 20767 / JCM 11484 / NBRC 15589 / NCIMB 2235).